The sequence spans 288 residues: ATP synthase subunit a (288 aa).

A run of 6 helical transmembrane segments spans residues 47–67, 104–124, 157–177, 199–219, 237–257, and 258–278; these read LDSM…FWMV, LIAP…LMDL, DPNI…FYSI, PIVQ…TLIA, LIFI…SVPW, and AIFH…LTIV.

Belongs to the ATPase A chain family. In terms of assembly, F-type ATPases have 2 components, CF(1) - the catalytic core - and CF(0) - the membrane proton channel. CF(1) has five subunits: alpha(3), beta(3), gamma(1), delta(1), epsilon(1). CF(0) has three main subunits: a(1), b(2) and c(9-12). The alpha and beta chains form an alternating ring which encloses part of the gamma chain. CF(1) is attached to CF(0) by a central stalk formed by the gamma and epsilon chains, while a peripheral stalk is formed by the delta and b chains.

The protein resides in the cell inner membrane. Functionally, key component of the proton channel; it plays a direct role in the translocation of protons across the membrane. The chain is ATP synthase subunit a from Psychrobacter arcticus (strain DSM 17307 / VKM B-2377 / 273-4).